A 188-amino-acid chain; its full sequence is Mitochondrial import receptor subunit TOM20 homolog (188 aa).

The Mitochondrial intermembrane portion of the chain corresponds to 1-12 (MSDTILGFNKSN). The chain crosses the membrane as a helical span at residues 13–31 (VVLAAGIAGAAFLGYCIYF). The Cytoplasmic portion of the chain corresponds to 32–188 (DHKRINAPDY…ELIDDTDDLE (157 aa)). Disordered regions lie at residues 42-73 (KDKI…AAPD) and 156-188 (DEAE…DDLE). Residues 58–67 (MAPRRPAAAG) are compositionally biased toward low complexity.

Belongs to the Tom20 family. As to quaternary structure, forms part of the preprotein translocase complex of the outer mitochondrial membrane (TOM complex).

The protein resides in the mitochondrion outer membrane. Functionally, central component of the receptor complex responsible for the recognition and translocation of cytosolically synthesized mitochondrial preproteins. Together with tomm-22 functions as the transit peptide receptor at the surface of the mitochondrion outer membrane and facilitates the movement of preproteins into the translocation pore. The sequence is that of Mitochondrial import receptor subunit TOM20 homolog from Caenorhabditis elegans.